The following is a 1401-amino-acid chain: DNA-directed RNA polymerase subunit beta (1401 aa).

It belongs to the RNA polymerase beta chain family. The RNAP catalytic core consists of 2 alpha, 1 beta, 1 beta' and 1 omega subunit. When a sigma factor is associated with the core the holoenzyme is formed, which can initiate transcription.

It carries out the reaction RNA(n) + a ribonucleoside 5'-triphosphate = RNA(n+1) + diphosphate. Its function is as follows. DNA-dependent RNA polymerase catalyzes the transcription of DNA into RNA using the four ribonucleoside triphosphates as substrates. This is DNA-directed RNA polymerase subunit beta from Zymomonas mobilis subsp. mobilis (strain ATCC 31821 / ZM4 / CP4).